Here is a 456-residue protein sequence, read N- to C-terminus: Gamma-aminobutyric acid receptor subunit alpha-1 (456 aa).

Positions 1–27 (MKKSPGLSDYLWAWTLFLSTLTGRSYG) are cleaved as a signal peptide. Topologically, residues 28-253 (QPSLQDELKD…FHLKRKIGYF (226 aa)) are extracellular. N-linked (GlcNAc...) asparagine glycosylation is present at Asn38. Arg94 contacts 4-aminobutanoate. Asn138 carries N-linked (GlcNAc...) asparagine glycosylation. Thr157 provides a ligand contact to 4-aminobutanoate. Residues Cys166 and Cys180 are joined by a disulfide bond. The helical transmembrane segment at 254-274 (VIQTYLPCIMTVILSQVSFWL) threads the bilayer. The Cytoplasmic segment spans residues 275–279 (NRESV). A helical membrane pass occupies residues 280–301 (PARTVFGVTTVLTMTTLSISAR). Over 302 to 311 (NSLPKVAYAT) the chain is Extracellular. The helical transmembrane segment at 312–333 (AMDWFIAVCYAFVFSALIEFAT) threads the bilayer. Residues 334-421 (VNYFTKRGYA…TFNSVSKIDR (88 aa)) are Cytoplasmic-facing. A helical membrane pass occupies residues 422 to 441 (LSRIAFPLLFGIFNLVYWAT). Topologically, residues 442–456 (YLNREPQLKAPTPHQ) are extracellular.

It belongs to the ligand-gated ion channel (TC 1.A.9) family. Gamma-aminobutyric acid receptor (TC 1.A.9.5) subfamily. GABRA1 sub-subfamily. As to quaternary structure, heteropentamer, formed by a combination of alpha (GABRA1-6), beta (GABRB1-3), gamma (GABRG1-3), delta (GABRD), epsilon (GABRE), rho (GABRR1-3), pi (GABRP) and theta (GABRQ) subunits, each subunit exhibiting distinct physiological and pharmacological properties. Interacts with UBQLN1. Interacts with TRAK1. Interacts with KIF21B. Identified in a complex of 720 kDa composed of LHFPL4, NLGN2, GABRA1, GABRB2, GABRG2 and GABRB3. Interacts with LHFPL4. Interacts with NLGN2. Interacts with SHISA7; interaction leads to the regulation of GABA(A) receptor trafficking, channel deactivation kinetics and pharmacology. Cerebellar granule cells, Purkinje cells and stellate/basket cells.

The protein localises to the postsynaptic cell membrane. Its subcellular location is the cell membrane. The protein resides in the cytoplasmic vesicle membrane. The enzyme catalyses chloride(in) = chloride(out). With respect to regulation, allosterically activated by benzodiazepines, the neuroanesthetic alphaxalone and pentobarbital. Inhibited by the antagonist bicuculline. Potentiated by histamine. Alpha subunit of the heteropentameric ligand-gated chloride channel gated by gamma-aminobutyric acid (GABA), a major inhibitory neurotransmitter in the brain. GABA-gated chloride channels, also named GABA(A) receptors (GABAAR), consist of five subunits arranged around a central pore and contain GABA active binding site(s) located at the alpha and beta subunit interface(s). When activated by GABA, GABAARs selectively allow the flow of chloride anions across the cell membrane down their electrochemical gradient. Alpha-1/GABRA1-containing GABAARs are largely synaptic. Chloride influx into the postsynaptic neuron following GABAAR opening decreases the neuron ability to generate a new action potential, thereby reducing nerve transmission. GABAARs containing alpha-1 and beta-2 or -3 subunits exhibit synaptogenic activity; the gamma-2 subunit being necessary but not sufficient to induce rapid synaptic contacts formation. GABAARs function also as histamine receptor where histamine binds at the interface of two neighboring beta subunits and potentiates GABA response. GABAARs containing alpha, beta and epsilon subunits also permit spontaneous chloride channel activity while preserving the structural information required for GABA-gated openings. Alpha-1-mediated plasticity in the orbitofrontal cortex regulates context-dependent action selection. Together with rho subunits, may also control neuronal and glial GABAergic transmission in the cerebellum. This chain is Gamma-aminobutyric acid receptor subunit alpha-1 (GABRA1), found in Bos taurus (Bovine).